Here is a 489-residue protein sequence, read N- to C-terminus: Phenylalanine--tRNA ligase alpha subunit (489 aa).

Residues Thr-316, 355–357 (QLD), Phe-395, and Phe-420 each bind L-phenylalanine.

Belongs to the class-II aminoacyl-tRNA synthetase family. Phe-tRNA synthetase alpha subunit type 2 subfamily. In terms of assembly, tetramer of two alpha and two beta subunits. Mg(2+) serves as cofactor.

The protein resides in the cytoplasm. It carries out the reaction tRNA(Phe) + L-phenylalanine + ATP = L-phenylalanyl-tRNA(Phe) + AMP + diphosphate + H(+). This Pyrobaculum aerophilum (strain ATCC 51768 / DSM 7523 / JCM 9630 / CIP 104966 / NBRC 100827 / IM2) protein is Phenylalanine--tRNA ligase alpha subunit.